Here is a 382-residue protein sequence, read N- to C-terminus: MSKPIRIGMVAGEPSGDILAAGMVAELKRQYPDAIIEGIGGPNMIDAGFHSLFDMETLSVMGLVEVLAHLPAILKVKKQLLAHFEQNPPDIFVGVDAPDFNLRVEKALKARGIKTMHYVSPTVWAWREKRIHKIAKAANRVLGLFPFEQQVYDKYHVPYTFVGHTMADAIAIEPDQNAARQELGVESNAYVLAVLPGSRRGEVETLLPVFLETIEAIHVKRSDIQFLIPAANEHRLAQIKAFLQEANNAEERLPIQVTQGTSRDAMIASDVILLASGTATLEAMLCKRPMVAAYLLSPLTYKIMQRLYKAPFFTLPNLLANEAIIPELLQEEVNAENMSNQLLNFFESDNSALIARFTDLHHTLKCNADKTAAKAVVEELFA.

The protein belongs to the LpxB family.

It carries out the reaction a lipid X + a UDP-2-N,3-O-bis[(3R)-3-hydroxyacyl]-alpha-D-glucosamine = a lipid A disaccharide + UDP + H(+). The protein operates within bacterial outer membrane biogenesis; LPS lipid A biosynthesis. In terms of biological role, condensation of UDP-2,3-diacylglucosamine and 2,3-diacylglucosamine-1-phosphate to form lipid A disaccharide, a precursor of lipid A, a phosphorylated glycolipid that anchors the lipopolysaccharide to the outer membrane of the cell. The polypeptide is Lipid-A-disaccharide synthase (Alteromonas mediterranea (strain DSM 17117 / CIP 110805 / LMG 28347 / Deep ecotype)).